The sequence spans 89 residues: Small ribosomal subunit protein uS15 (89 aa).

It belongs to the universal ribosomal protein uS15 family. As to quaternary structure, part of the 30S ribosomal subunit. Forms a bridge to the 50S subunit in the 70S ribosome, contacting the 23S rRNA.

Functionally, one of the primary rRNA binding proteins, it binds directly to 16S rRNA where it helps nucleate assembly of the platform of the 30S subunit by binding and bridging several RNA helices of the 16S rRNA. Forms an intersubunit bridge (bridge B4) with the 23S rRNA of the 50S subunit in the ribosome. The sequence is that of Small ribosomal subunit protein uS15 from Bifidobacterium adolescentis (strain ATCC 15703 / DSM 20083 / NCTC 11814 / E194a).